Here is a 296-residue protein sequence, read N- to C-terminus: N-acetylmuramic acid 6-phosphate etherase (296 aa).

In terms of domain architecture, SIS spans 54–217; that stretch reads VISCFQKGGR…STASMVGIGK (164 aa). The active-site Proton donor is the E82. The active site involves E113.

Belongs to the GCKR-like family. MurNAc-6-P etherase subfamily. In terms of assembly, homodimer.

It catalyses the reaction N-acetyl-D-muramate 6-phosphate + H2O = N-acetyl-D-glucosamine 6-phosphate + (R)-lactate. The protein operates within amino-sugar metabolism; N-acetylmuramate degradation. Its function is as follows. Specifically catalyzes the cleavage of the D-lactyl ether substituent of MurNAc 6-phosphate, producing GlcNAc 6-phosphate and D-lactate. In Listeria monocytogenes serotype 4b (strain CLIP80459), this protein is N-acetylmuramic acid 6-phosphate etherase.